The primary structure comprises 271 residues: Protein CDV3 homolog (271 aa).

Positions 37–47 are enriched in basic and acidic residues; that stretch reads KREVVKPKKPE. Disordered regions lie at residues 37-151 and 186-271; these read KREV…GHGP and SQQA…DEAS. Over residues 48 to 61 the composition is skewed to low complexity; sequence VAAGGVAVVGENEN. A compositionally biased stretch (acidic residues) spans 73 to 82; that stretch reads VEEEWKEFEE. The segment covering 95 to 114 has biased composition (polar residues); that stretch reads QLSTISSARSRTAQESSESQ. Serine 134 carries the phosphoserine modification. A compositionally biased stretch (basic and acidic residues) spans 224-242; sequence RPEEQRKKKNEPAFEEVRH.

Belongs to the CDV3 family.

This Drosophila melanogaster (Fruit fly) protein is Protein CDV3 homolog.